The primary structure comprises 341 residues: L-threonine 3-dehydrogenase (341 aa).

A Zn(2+)-binding site is contributed by Cys-38. Active-site charge relay system residues include Thr-40 and His-43. Residues His-63, Glu-64, Cys-93, Cys-96, Cys-99, and Cys-107 each coordinate Zn(2+). Residues Ile-175, Asp-195, Arg-200, 262 to 264, and 286 to 287 each bind NAD(+); these read LGI and IY.

It belongs to the zinc-containing alcohol dehydrogenase family. In terms of assembly, homotetramer. The cofactor is Zn(2+).

It localises to the cytoplasm. The enzyme catalyses L-threonine + NAD(+) = (2S)-2-amino-3-oxobutanoate + NADH + H(+). The protein operates within amino-acid degradation; L-threonine degradation via oxydo-reductase pathway; glycine from L-threonine: step 1/2. Its function is as follows. Catalyzes the NAD(+)-dependent oxidation of L-threonine to 2-amino-3-ketobutyrate. This chain is L-threonine 3-dehydrogenase, found in Yersinia enterocolitica serotype O:8 / biotype 1B (strain NCTC 13174 / 8081).